Reading from the N-terminus, the 143-residue chain is AP-2 complex subunit sigma (143 aa).

It belongs to the adaptor complexes small subunit family. Adaptor protein complex 2 (AP-2) is a heterotetramer composed of two large adaptins (alpha-type subunit APL3 and beta-type subunit APL1), a medium chain (mu-type subunit APM4) and a small adaptin (sigma-type subunit APS2).

It is found in the cell membrane. It localises to the membrane. The protein localises to the coated pit. Component of the adaptor complexes which link clathrin to receptors in coated vesicles. Clathrin-associated protein complexes are believed to interact with the cytoplasmic tails of membrane proteins, leading to their selection and concentration. The sequence is that of AP-2 complex subunit sigma (aps-2) from Neurospora crassa (strain ATCC 24698 / 74-OR23-1A / CBS 708.71 / DSM 1257 / FGSC 987).